A 356-amino-acid polypeptide reads, in one-letter code: UDP-N-acetylglucosamine--N-acetylmuramyl-(pentapeptide) pyrophosphoryl-undecaprenol N-acetylglucosamine transferase (356 aa).

UDP-N-acetyl-alpha-D-glucosamine-binding positions include 12-14, Asn-124, Arg-163, Ser-188, Ile-242, and Gln-287; that span reads TGG.

The protein belongs to the glycosyltransferase 28 family. MurG subfamily.

The protein resides in the cell inner membrane. It carries out the reaction di-trans,octa-cis-undecaprenyl diphospho-N-acetyl-alpha-D-muramoyl-L-alanyl-D-glutamyl-meso-2,6-diaminopimeloyl-D-alanyl-D-alanine + UDP-N-acetyl-alpha-D-glucosamine = di-trans,octa-cis-undecaprenyl diphospho-[N-acetyl-alpha-D-glucosaminyl-(1-&gt;4)]-N-acetyl-alpha-D-muramoyl-L-alanyl-D-glutamyl-meso-2,6-diaminopimeloyl-D-alanyl-D-alanine + UDP + H(+). It functions in the pathway cell wall biogenesis; peptidoglycan biosynthesis. Cell wall formation. Catalyzes the transfer of a GlcNAc subunit on undecaprenyl-pyrophosphoryl-MurNAc-pentapeptide (lipid intermediate I) to form undecaprenyl-pyrophosphoryl-MurNAc-(pentapeptide)GlcNAc (lipid intermediate II). In Pseudomonas savastanoi pv. phaseolicola (strain 1448A / Race 6) (Pseudomonas syringae pv. phaseolicola (strain 1448A / Race 6)), this protein is UDP-N-acetylglucosamine--N-acetylmuramyl-(pentapeptide) pyrophosphoryl-undecaprenol N-acetylglucosamine transferase.